A 404-amino-acid polypeptide reads, in one-letter code: Probable tRNA sulfurtransferase (404 aa).

Residues 61-166 (EAVSERLKDV…SGYSYIMCDE (106 aa)) form the THUMP domain. ATP is bound by residues 184–185 (LL), 209–210 (HF), Arg-266, Gly-288, and Gln-297.

Belongs to the ThiI family.

The protein localises to the cytoplasm. It carries out the reaction [ThiI sulfur-carrier protein]-S-sulfanyl-L-cysteine + a uridine in tRNA + 2 reduced [2Fe-2S]-[ferredoxin] + ATP + H(+) = [ThiI sulfur-carrier protein]-L-cysteine + a 4-thiouridine in tRNA + 2 oxidized [2Fe-2S]-[ferredoxin] + AMP + diphosphate. The catalysed reaction is [ThiS sulfur-carrier protein]-C-terminal Gly-Gly-AMP + S-sulfanyl-L-cysteinyl-[cysteine desulfurase] + AH2 = [ThiS sulfur-carrier protein]-C-terminal-Gly-aminoethanethioate + L-cysteinyl-[cysteine desulfurase] + A + AMP + 2 H(+). It functions in the pathway cofactor biosynthesis; thiamine diphosphate biosynthesis. In terms of biological role, catalyzes the ATP-dependent transfer of a sulfur to tRNA to produce 4-thiouridine in position 8 of tRNAs, which functions as a near-UV photosensor. Also catalyzes the transfer of sulfur to the sulfur carrier protein ThiS, forming ThiS-thiocarboxylate. This is a step in the synthesis of thiazole, in the thiamine biosynthesis pathway. The sulfur is donated as persulfide by IscS. The polypeptide is Probable tRNA sulfurtransferase (Bacillus cereus (strain B4264)).